A 250-amino-acid chain; its full sequence is Aquaporin TIP2-3 (250 aa).

At M1 the chain carries N-acetylmethionine. Residues 1–24 (MVKIEVGSVGDSFSVSSLKAYLSE) lie on the Cytoplasmic side of the membrane. At K3 the chain carries N6,N6-dimethyllysine. Residues 25–45 (FIATLLFVFAGVGSAVAFAKL) traverse the membrane as a helical segment. At 46–54 (TSDGALDPA) the chain is on the vacuolar side. A helical membrane pass occupies residues 55 to 75 (GLVAIAIAHAFALFVGVSIAA). Residues 76–101 (NISGGHLNPAVTLGLAIGGNITLITG) are Cytoplasmic-facing. Positions 83–85 (NPA) match the NPA 1 motif. A helical transmembrane segment spans residues 102–122 (FFYWIAQCLGSIVACLLLVFV). At 123-134 (TNGKSVPTHGVS) the chain is on the vacuolar side. A helical transmembrane segment spans residues 135-155 (AGLGAVEGVVMEIVVTFALVY). Residues 156 to 168 (TVYATAADPKKGS) lie on the Cytoplasmic side of the membrane. The helical transmembrane segment at 169–189 (LGTIAPIAIGFIVGANILAAG) threads the bilayer. Topologically, residues 190–217 (PFSGGSMNPARSFGPAVVSGDLSQIWIY) are vacuolar. The short motif at 197–199 (NPA) is the NPA 2 element. The helical transmembrane segment at 218-238 (WVGPLVGGALAGLIYGDVFIG) threads the bilayer. Over 239-250 (SYEAVETREIRV) the chain is Cytoplasmic.

Belongs to the MIP/aquaporin (TC 1.A.8) family. TIP (TC 1.A.8.10) subfamily. As to quaternary structure, interacts with cucumber mosaic virus (CMV) Protein 1a. In terms of tissue distribution, widely expressed.

It is found in the vacuole membrane. Functionally, transports methylammonium or ammonium in yeast cells, preferentially at high medium pH. May participate in vacuolar compartmentation and detoxification of ammonium. The protein is Aquaporin TIP2-3 (TIP2-3) of Arabidopsis thaliana (Mouse-ear cress).